The following is a 107-amino-acid chain: Sperm-specific class P protein 32 (107 aa).

A disordered region spans residues 1–20 (MLTIEPPSATFPASGGSSTH). Positions 1-107 (MLTIEPPSAT…GDVTILLKTN (107 aa)) constitute an MSP domain.

As to expression, expressed at higher level in testis.

This chain is Sperm-specific class P protein 32 (ssp-32), found in Caenorhabditis elegans.